A 1052-amino-acid polypeptide reads, in one-letter code: Carbamoyl phosphate synthase large chain (1052 aa).

The interval 1–399 (MRENVKRVLV…ALQKAVRMLD (399 aa)) is carboxyphosphate synthetic domain. Positions 127, 167, 173, 174, 206, 208, 213, 239, 240, 241, 282, and 296 each coordinate ATP. The region spanning 131-325 (RETMINVNLP…LAYVSAKLAL (195 aa)) is the ATP-grasp 1 domain. Mg(2+) contacts are provided by Gln282, Glu296, and Asn298. Mn(2+) is bound by residues Gln282, Glu296, and Asn298. Residues 400–548 (LGEPGIIGGK…VTYNGTEDDI (149 aa)) form an oligomerization domain region. The tract at residues 549 to 930 (EFSNGIRKLL…LKSWLSSSPN (382 aa)) is carbamoyl phosphate synthetic domain. The ATP-grasp 2 domain maps to 674–864 (SRLLDKLGIK…IIDLALTGVI (191 aa)). Arg710, Lys749, Ile751, Glu756, Gly780, Val781, His782, Ser783, Gln823, and Glu835 together coordinate ATP. Positions 823, 835, and 837 each coordinate Mg(2+). Positions 823, 835, and 837 each coordinate Mn(2+). An MGS-like domain is found at 930 to 1052 (NRLPDQKGIA…YEIGEYGAGI (123 aa)). Residues 931 to 1052 (RLPDQKGIAL…YEIGEYGAGI (122 aa)) form an allosteric domain region.

This sequence belongs to the CarB family. In terms of assembly, composed of two chains; the small (or glutamine) chain promotes the hydrolysis of glutamine to ammonia, which is used by the large (or ammonia) chain to synthesize carbamoyl phosphate. Tetramer of heterodimers (alpha,beta)4. Mg(2+) is required as a cofactor. Mn(2+) serves as cofactor.

It carries out the reaction hydrogencarbonate + L-glutamine + 2 ATP + H2O = carbamoyl phosphate + L-glutamate + 2 ADP + phosphate + 2 H(+). It catalyses the reaction hydrogencarbonate + NH4(+) + 2 ATP = carbamoyl phosphate + 2 ADP + phosphate + 2 H(+). Its pathway is amino-acid biosynthesis; L-arginine biosynthesis; carbamoyl phosphate from bicarbonate: step 1/1. The protein operates within pyrimidine metabolism; UMP biosynthesis via de novo pathway; (S)-dihydroorotate from bicarbonate: step 1/3. Its function is as follows. Large subunit of the glutamine-dependent carbamoyl phosphate synthetase (CPSase). CPSase catalyzes the formation of carbamoyl phosphate from the ammonia moiety of glutamine, carbonate, and phosphate donated by ATP, constituting the first step of 2 biosynthetic pathways, one leading to arginine and/or urea and the other to pyrimidine nucleotides. The large subunit (synthetase) binds the substrates ammonia (free or transferred from glutamine from the small subunit), hydrogencarbonate and ATP and carries out an ATP-coupled ligase reaction, activating hydrogencarbonate by forming carboxy phosphate which reacts with ammonia to form carbamoyl phosphate. This Sulfolobus acidocaldarius (strain ATCC 33909 / DSM 639 / JCM 8929 / NBRC 15157 / NCIMB 11770) protein is Carbamoyl phosphate synthase large chain.